Consider the following 380-residue polypeptide: Cytochrome b (380 aa).

4 helical membrane-spanning segments follow: residues 33 to 53, 77 to 98, 113 to 133, and 178 to 198; these read FGSL…FLAM, WLIR…YLHV, WNIG…GYVL, and FFAF…LHLL. Heme b contacts are provided by histidine 83 and histidine 97. Histidine 182 and histidine 196 together coordinate heme b. Residue histidine 201 coordinates a ubiquinone. The next 4 membrane-spanning stretches (helical) occupy residues 226-246, 288-308, 320-340, and 347-367; these read YKDI…ALFS, LGGV…PILH, FSQF…WIGG, and FIII…LLIP.

It belongs to the cytochrome b family. In terms of assembly, the cytochrome bc1 complex contains 3 respiratory subunits (MT-CYB, CYC1 and UQCRFS1), 2 core proteins (UQCRC1 and UQCRC2) and probably 6 low-molecular weight proteins. Requires heme b as cofactor.

The protein resides in the mitochondrion inner membrane. Its function is as follows. Component of the ubiquinol-cytochrome c reductase complex (complex III or cytochrome b-c1 complex) that is part of the mitochondrial respiratory chain. The b-c1 complex mediates electron transfer from ubiquinol to cytochrome c. Contributes to the generation of a proton gradient across the mitochondrial membrane that is then used for ATP synthesis. This is Cytochrome b (mt-cyb) from Arapaima gigas (Arapaima).